The sequence spans 727 residues: Anaphase-promoting complex subunit 5 (727 aa).

At Ser-180 the chain carries Phosphoserine. TPR repeat units lie at residues Gln-194–Asp-234, Phe-235–Leu-285, Arg-286–His-322, Val-323–Pro-359, Arg-360–Ile-390, Asp-391–Phe-438, Ala-439–Asn-472, Ser-473–Gly-512, Ile-513–Val-552, Ile-553–Ala-592, Ser-593–Lys-632, Gly-633–Glu-668, and Ala-669–Val-708. Thr-217 carries the post-translational modification Phosphothreonine.

This sequence belongs to the APC5 family. The mammalian APC/C is composed at least of 14 distinct subunits ANAPC1, ANAPC2, CDC27/APC3, ANAPC4, ANAPC5, CDC16/APC6, ANAPC7, CDC23/APC8, ANAPC10, ANAPC11, CDC26/APC12, ANAPC13, ANAPC15 and ANAPC16 that assemble into a complex of at least 19 chains with a combined molecular mass of around 1.2 MDa; APC/C interacts with FZR1 and FBXO5.

It localises to the nucleus. The protein resides in the cytoplasm. Its subcellular location is the cytoskeleton. It is found in the spindle. It functions in the pathway protein modification; protein ubiquitination. Component of the anaphase promoting complex/cyclosome (APC/C), a cell cycle-regulated E3 ubiquitin ligase that controls progression through mitosis and the G1 phase of the cell cycle. The APC/C complex acts by mediating ubiquitination and subsequent degradation of target proteins: it mainly mediates the formation of 'Lys-11'-linked polyubiquitin chains and, to a lower extent, the formation of 'Lys-48'- and 'Lys-63'-linked polyubiquitin chains. The APC/C complex catalyzes assembly of branched 'Lys-11'-/'Lys-48'-linked branched ubiquitin chains on target proteins. This Rattus norvegicus (Rat) protein is Anaphase-promoting complex subunit 5 (Anapc5).